The sequence spans 459 residues: Phosphomethylpyrimidine synthase (459 aa).

Substrate contacts are provided by residues Asn80, Met109, Tyr139, His175, 195–197, 236–239, and Glu275; these read SRG and DSLR. Position 279 (His279) interacts with Zn(2+). Tyr302 contributes to the substrate binding site. Residue His343 participates in Zn(2+) binding. [4Fe-4S] cluster-binding residues include Cys423, Cys426, and Cys431.

It belongs to the ThiC family. Requires [4Fe-4S] cluster as cofactor.

It catalyses the reaction 5-amino-1-(5-phospho-beta-D-ribosyl)imidazole + S-adenosyl-L-methionine = 4-amino-2-methyl-5-(phosphooxymethyl)pyrimidine + CO + 5'-deoxyadenosine + formate + L-methionine + 3 H(+). It functions in the pathway cofactor biosynthesis; thiamine diphosphate biosynthesis. Functionally, catalyzes the synthesis of the hydroxymethylpyrimidine phosphate (HMP-P) moiety of thiamine from aminoimidazole ribotide (AIR) in a radical S-adenosyl-L-methionine (SAM)-dependent reaction. The chain is Phosphomethylpyrimidine synthase from Prochlorococcus marinus (strain MIT 9303).